The sequence spans 275 residues: Serine/threonine-protein phosphatase PGAM5, mitochondrial (275 aa).

The chain crosses the membrane as a helical span at residues 7–24 (LIAGGSAAAAILGVVAAG).

Belongs to the phosphoglycerate mutase family. BPG-dependent PGAM subfamily. Post-translationally, phosphorylated by the RIPK1/RIPK3 complex under necrotic conditions. This phosphorylation increases PGAM5 phosphatase activity.

Its subcellular location is the mitochondrion outer membrane. It carries out the reaction O-phospho-L-seryl-[protein] + H2O = L-seryl-[protein] + phosphate. The catalysed reaction is O-phospho-L-threonyl-[protein] + H2O = L-threonyl-[protein] + phosphate. Functionally, displays phosphatase activity for serine/threonine residues. Has apparently no phosphoglycerate mutase activity. May be regulator of mitochondrial dynamics. May be a central mediator for programmed necrosis. This is Serine/threonine-protein phosphatase PGAM5, mitochondrial (pgam5) from Xenopus laevis (African clawed frog).